Reading from the N-terminus, the 313-residue chain is CRISPR-associated endonuclease Cas1 1 (313 aa).

Residues E144, H211, and D224 each contribute to the Mn(2+) site. Residues 288 to 313 (PPLDAPEAVDPVIPPEEPSGDDGHRG) are disordered.

It belongs to the CRISPR-associated endonuclease Cas1 family. As to quaternary structure, homodimer, forms a heterotetramer with a Cas2 homodimer. It depends on Mg(2+) as a cofactor. The cofactor is Mn(2+).

Its function is as follows. CRISPR (clustered regularly interspaced short palindromic repeat), is an adaptive immune system that provides protection against mobile genetic elements (viruses, transposable elements and conjugative plasmids). CRISPR clusters contain spacers, sequences complementary to antecedent mobile elements, and target invading nucleic acids. CRISPR clusters are transcribed and processed into CRISPR RNA (crRNA). Acts as a dsDNA endonuclease. Involved in the integration of spacer DNA into the CRISPR cassette. This is CRISPR-associated endonuclease Cas1 1 from Rhodospirillum rubrum (strain ATCC 11170 / ATH 1.1.1 / DSM 467 / LMG 4362 / NCIMB 8255 / S1).